A 361-amino-acid polypeptide reads, in one-letter code: Basic helix-loop-helix protein 79 (361 aa).

Residues 66–159 (APEASNGSGS…ASTVTAGQKT (94 aa)) form a disordered region. Over residues 124–138 (GRPERARPGAKKKAE) the composition is skewed to basic and acidic residues. The span at 146–157 (PATSASTVTAGQ) shows a compositional bias: polar residues. The short motif at 166–173 (ARRGQATD) is the Nuclear localization signal element. The tract at residues 170 to 183 (QATDSHSLAERVRR) is basic motif; degenerate. In terms of domain architecture, bHLH spans 170-220 (QATDSHSLAERVRRERISERMRYLQELVPGCNKVTGKAGMLDEIINYVQSL). A helix-loop-helix motif region spans residues 184–220 (ERISERMRYLQELVPGCNKVTGKAGMLDEIINYVQSL).

It belongs to the bHLH protein family. In terms of assembly, homodimer. Interacts with IBH1.

The protein resides in the nucleus. In terms of biological role, together with BCL1, positive regulator of cell elongation at least partially through increased gibberellic acid (GA) biosynthesis. This chain is Basic helix-loop-helix protein 79, found in Oryza sativa subsp. indica (Rice).